The sequence spans 261 residues: Cytochrome c oxidase subunit 3 (261 aa).

Residues 1–15 (MTHQTHAYHMVNPSP) lie on the Mitochondrial matrix side of the membrane. A helical membrane pass occupies residues 16-34 (WPLTGALSALLMTSGLIMW). The Mitochondrial intermembrane segment spans residues 35–40 (FHFNST). The chain crosses the membrane as a helical span at residues 41-66 (ALLMLGLTTNMLTMYQWWRDIIREST). Residues 67–72 (FQGHHT) lie on the Mitochondrial matrix side of the membrane. A helical transmembrane segment spans residues 73 to 105 (PVVQKGLRYGMILFIISEVLFFTGFFWAFYHSS). Residues 106–128 (LAPTPELGGCWPPTGINPLNPLE) are Mitochondrial intermembrane-facing. A helical membrane pass occupies residues 129-152 (VPLLNTSVLLASGVSITWAHHSLM). Topologically, residues 153 to 155 (EGN) are mitochondrial matrix. Residues 156-183 (RSHMLQALFITITLGVYFTLLQASEYYE) traverse the membrane as a helical segment. At 184–190 (APFTISD) the chain is on the mitochondrial intermembrane side. The helical transmembrane segment at 191 to 223 (GVYGSTFFVATGFHGLHVIIGSTFLIVCFFRQL) threads the bilayer. Residues 224 to 232 (KFHFTSNHH) lie on the Mitochondrial matrix side of the membrane. A helical membrane pass occupies residues 233 to 256 (FGFEAAAWYWHFVDVVWLFLYVSI). The Mitochondrial intermembrane segment spans residues 257 to 261 (YWWGS).

This sequence belongs to the cytochrome c oxidase subunit 3 family. As to quaternary structure, component of the cytochrome c oxidase (complex IV, CIV), a multisubunit enzyme composed of 14 subunits. The complex is composed of a catalytic core of 3 subunits MT-CO1, MT-CO2 and MT-CO3, encoded in the mitochondrial DNA, and 11 supernumerary subunits COX4I, COX5A, COX5B, COX6A, COX6B, COX6C, COX7A, COX7B, COX7C, COX8 and NDUFA4, which are encoded in the nuclear genome. The complex exists as a monomer or a dimer and forms supercomplexes (SCs) in the inner mitochondrial membrane with NADH-ubiquinone oxidoreductase (complex I, CI) and ubiquinol-cytochrome c oxidoreductase (cytochrome b-c1 complex, complex III, CIII), resulting in different assemblies (supercomplex SCI(1)III(2)IV(1) and megacomplex MCI(2)III(2)IV(2)).

The protein localises to the mitochondrion inner membrane. The enzyme catalyses 4 Fe(II)-[cytochrome c] + O2 + 8 H(+)(in) = 4 Fe(III)-[cytochrome c] + 2 H2O + 4 H(+)(out). Functionally, component of the cytochrome c oxidase, the last enzyme in the mitochondrial electron transport chain which drives oxidative phosphorylation. The respiratory chain contains 3 multisubunit complexes succinate dehydrogenase (complex II, CII), ubiquinol-cytochrome c oxidoreductase (cytochrome b-c1 complex, complex III, CIII) and cytochrome c oxidase (complex IV, CIV), that cooperate to transfer electrons derived from NADH and succinate to molecular oxygen, creating an electrochemical gradient over the inner membrane that drives transmembrane transport and the ATP synthase. Cytochrome c oxidase is the component of the respiratory chain that catalyzes the reduction of oxygen to water. Electrons originating from reduced cytochrome c in the intermembrane space (IMS) are transferred via the dinuclear copper A center (CU(A)) of subunit 2 and heme A of subunit 1 to the active site in subunit 1, a binuclear center (BNC) formed by heme A3 and copper B (CU(B)). The BNC reduces molecular oxygen to 2 water molecules using 4 electrons from cytochrome c in the IMS and 4 protons from the mitochondrial matrix. This is Cytochrome c oxidase subunit 3 (MT-CO3) from Syncerus caffer (African buffalo).